Here is a 268-residue protein sequence, read N- to C-terminus: MDVFNLLEAAFLGLIEGLTEFIPVSSTGHLLLIGHFLGFESTGKTFEVLIQLGAILAILTVYSAKLLKILTDFPRDARTRRFVFGILVAFLPAAVIGALAHGFIKSVLFETPMLVCIMLIIGGFILLWVDQLNLRPRYHDVMDYPLPMCLAIGFIQCLAMIPGVSRSGSTIVGSLLLGADKRSAAEFSFFLAMPTMAGAFAYDLYKSRNILSLNDGALIGVGFVMAFISGVFVVRYLLDYVSRHGFKLFGWWRLIVGSVGLAALLVWG.

The next 8 helical transmembrane spans lie at 3–23 (VFNL…EFIP), 46–66 (FEVL…SAKL), 84–104 (FGIL…HGFI), 107–127 (VLFE…FILL), 144–164 (YPLP…IPGV), 184–204 (AAEF…AYDL), 218–238 (LIGV…RYLL), and 248–268 (LFGW…LVWG).

The protein belongs to the UppP family.

It localises to the cell inner membrane. The enzyme catalyses di-trans,octa-cis-undecaprenyl diphosphate + H2O = di-trans,octa-cis-undecaprenyl phosphate + phosphate + H(+). In terms of biological role, catalyzes the dephosphorylation of undecaprenyl diphosphate (UPP). Confers resistance to bacitracin. The protein is Undecaprenyl-diphosphatase of Brucella anthropi (strain ATCC 49188 / DSM 6882 / CCUG 24695 / JCM 21032 / LMG 3331 / NBRC 15819 / NCTC 12168 / Alc 37) (Ochrobactrum anthropi).